The sequence spans 525 residues: NGFI-A-binding protein 2 (525 aa).

Residues 1–22 are disordered; that stretch reads MHRAPSPTAEQPPGGGDSARRT. Serine 6 is subject to Phosphoserine. The NCD1 stretch occupies residues 35-113; that stretch reads ALPRTLGELQ…REWATNPGLF (79 aa). The interval 135–237 is disordered; it reads GTRKGSMSNG…GGTGGGPDRL (103 aa). 4 positions are modified to phosphoserine: serine 157, serine 159, serine 162, and serine 171. Residues 212–234 show a composition bias toward gly residues; the sequence is AGGGVPEGTGAGGLAAGGTGGGP. The segment at 267 to 356 is NCD2; the sequence is LLKLNKKLAR…SRQVARESTY (90 aa). The interval 353–384 is necessary for nuclear localization; that stretch reads ESTYLSSLKGSRLHPEELGGPPLKKLKQEVGE. Lysine 379 participates in a covalent cross-link: Glycyl lysine isopeptide (Lys-Gly) (interchain with G-Cter in SUMO1). Residues 380-416 form a disordered region; the sequence is QEVGEQSHPEIQQPPPGPESYVPPYRPSLEEDSASLS. Serine 479 is modified (phosphoserine). The segment at 502 to 525 is disordered; the sequence is PGPHPALVEGRRSSVKVEAEASRQ. Residues 510–525 show a composition bias toward basic and acidic residues; it reads EGRRSSVKVEAEASRQ. A Glycyl lysine isopeptide (Lys-Gly) (interchain with G-Cter in SUMO1); alternate cross-link involves residue lysine 517. Lysine 517 participates in a covalent cross-link: Glycyl lysine isopeptide (Lys-Gly) (interchain with G-Cter in SUMO2); alternate.

This sequence belongs to the NAB family. As to quaternary structure, homomultimers may associate with EGR1 bound to DNA. Sumoylation by EGR2 represses EGR2 transcriptional activity in hindbrain. As to expression, widely expressed at low levels. Highly expressed in melanoma cell lines.

It localises to the nucleus. Its function is as follows. Acts as a transcriptional repressor for zinc finger transcription factors EGR1 and EGR2. Isoform 2 lacks repression ability. The polypeptide is NGFI-A-binding protein 2 (NAB2) (Homo sapiens (Human)).